Here is a 276-residue protein sequence, read N- to C-terminus: Type II pantothenate kinase (276 aa).

8–15 (DAGGTLTK) lines the ATP pocket. Glu-76 (proton acceptor) is an active-site residue. ATP is bound by residues Thr-105, 127-131 (GGTIM), Phe-143, and Ser-230.

It belongs to the type II pantothenate kinase family. Homodimer.

It is found in the cytoplasm. It catalyses the reaction (R)-pantothenate + ATP = (R)-4'-phosphopantothenate + ADP + H(+). Its pathway is cofactor biosynthesis; coenzyme A biosynthesis; CoA from (R)-pantothenate: step 1/5. In terms of biological role, catalyzes the phosphorylation of pantothenate (Pan), the first step in CoA biosynthesis. This is Type II pantothenate kinase from Bacillus thuringiensis subsp. konkukian (strain 97-27).